The sequence spans 599 residues: Cytochrome P450 monooxygenase ALT8 (599 aa).

The next 2 membrane-spanning stretches (helical) occupy residues 4 to 21 (LACVGAAAMACALAVYLG) and 36 to 56 (ILFGCSGLWYVWKGLLWPAYF). N-linked (GlcNAc...) asparagine glycosylation occurs at N127. A compositionally biased stretch (low complexity) spans 495 to 504 (DDSSAASPSF). Residues 495-522 (DDSSAASPSFGGSGKRKSQYTDTHKEPS) are disordered. Residue C539 coordinates heme.

It belongs to the cytochrome P450 family. It depends on heme as a cofactor.

Its subcellular location is the membrane. It functions in the pathway secondary metabolite biosynthesis. In terms of biological role, cytochrome P450 monooxygenase; part of the gene cluster that mediates the biosynthesis of the host-selective toxins (HSTs) AAL-toxins, sphinganine-analog mycotoxins responsible for Alternaria stem canker on tomato by the tomato pathotype. The biosynthesis starts with the polyketide synthase ALT1-catalyzed C-16 carbon chain assembly from one starter acetyl-CoA unit with malonyl-CoA extender units. ALT1 also selectively transfers methyl groups at the first and the third cycle of chain elongation for AAL toxin. The C-16 polyketide chain is released from the enzyme by a nucleophilic attack of a carbanion, which is derived from R-carbon of glycin by decarboxylation, on the carbonyl carbon of polyketide acyl chain. This step is probably catalyzed by a pyridoxal 5'-phosphate-dependent aminoacyl transferase ALT4. The respective functions of the other enzymes encoded by the cluster have still to be elucidated. The sphingosine N-acyltransferase-like protein ALT7 seems not to act as a resistance/self-tolerance factor against the toxin in the toxin biosynthetic gene cluster, contrary to what is expected. The protein is Cytochrome P450 monooxygenase ALT8 of Alternaria alternata (Alternaria rot fungus).